The chain runs to 125 residues: MLKEFKQFIARGNVIDLAVGVIIGAAFTAIVQSLVKNLINPLIGLFIGRIDLSNLTLKVGEANFRYGSFLNSIINFLIISFIVFLIVKAVNKFTKKEEEETPAAPTETDYLKEIRDLLKEKRSIK.

2 helical membrane-spanning segments follow: residues 14–34 (VIDL…VQSL) and 67–87 (GSFL…FLIV).

The protein belongs to the MscL family. As to quaternary structure, homopentamer.

It is found in the cell membrane. Functionally, channel that opens in response to stretch forces in the membrane lipid bilayer. May participate in the regulation of osmotic pressure changes within the cell. The sequence is that of Large-conductance mechanosensitive channel from Lactobacillus helveticus (strain DPC 4571).